Here is a 579-residue protein sequence, read N- to C-terminus: Nuclear receptor coactivator 5 (579 aa).

An N-acetylmethionine modification is found at methionine 1. Residues 1–78 (MNTAPSRPSP…LRDHRDSRSV (78 aa)) are disordered. Residues 1-158 (MNTAPSRPSP…RDSFDGRGPP (158 aa)) are transcription repression. Phosphothreonine is present on threonine 3. Phosphoserine is present on residues serine 9, serine 21, serine 24, serine 29, and serine 34. Composition is skewed to basic and acidic residues over residues 11-62 (TRRD…DLRD) and 68-78 (DLRDHRDSRSV). Phosphoserine occurs at positions 96, 116, 126, 143, and 151. The interval 148 to 173 (YRDSFDGRGPPGPESQSRAKERLKRE) is disordered. Residues 164-173 (SRAKERLKRE) are compositionally biased toward basic and acidic residues. Threonine 274 is subject to Phosphothreonine. Positions 345–349 (LINLL) match the LXXLL motif motif. Disordered stretches follow at residues 375–428 (MRSS…PTSQ), 444–537 (VTAN…NFDN), and 560–579 (QTTA…QRHY). Serine 378 is modified (phosphoserine). Residue threonine 379 is modified to Phosphothreonine. Phosphoserine is present on serine 381. The span at 395–413 (SGASLKTQPSSQPLQSGQV) shows a compositional bias: polar residues. Over residues 446 to 457 (ANSSSASPSVAA) the composition is skewed to low complexity. Positions 458–579 (GNTPNQNFST…APMGSYQRHY (122 aa)) are transcription activation. Composition is skewed to polar residues over residues 459-485 (NTPN…NQPP) and 520-537 (SNMT…NFDN).

In terms of assembly, binds HTATIP2/TIP30. Interacts with YLPM1. Forms a complex with ILF2, ILF3, YLPM1, KHDRBS1, RBMX and PPP1CA. Widely expressed.

Its subcellular location is the nucleus. Its function is as follows. Nuclear receptor coregulator that can have both coactivator and corepressor functions. Interacts with nuclear receptors for steroids (ESR1 and ESR2) independently of the steroid binding domain (AF-2) of the ESR receptors, and with the orphan nuclear receptor NR1D2. Involved in the coactivation of nuclear steroid receptors (ER) as well as the corepression of MYC in response to 17-beta-estradiol (E2). The polypeptide is Nuclear receptor coactivator 5 (NCOA5) (Homo sapiens (Human)).